Consider the following 500-residue polypeptide: MSRLPDRSLLTRCEIFVYFGVYIAYIVVGLYKIYGLRDHIVKEAKFQFPEGWSLYPFSQRRRDDSNDELENFGDFIVSFWPFYLLHVAVQGFIRWKRPRLQCLGFIGVCALALSVNLDWSSMVLLVTLIASYYIVSLLSLKFLVWLLSAGWILCINVMQKNVWWTDRVGYTEYVLVIVTMSWSVLRGCSYSLSKIGAKQEDLTRYSLVQYLGYAMYFPCLTYGPIISYQRFAARREDEVQNWLGFVGGVLRSAIWWLVMQCALHYFYIHYMSRDVRMVEMMDSVFWQHSAGYFMGQFFFLYYVVTYGLGIAFAVQDGIPAPNRPRCIGRIHFYSDMWKYFDEGLYEFLFQNIYAELCGKRSSAAAKFGATALTFAFVFVWHGCYTYVLIWSILNFLCLAAEKVFKTFTAMPEYQRWTQRHLGAVGAQRLYAMLATQLFIPAAFSNVYFIGGQEIGDFLMRGAYLSGVGNYVALCFCSYCFFQCSELLLTKSDGRSKTKTF.

The next 10 membrane-spanning stretches (helical) occupy residues 15–35 (IFVYFGVYIAYIVVGLYKIYG), 73–93 (GDFIVSFWPFYLLHVAVQGFI), 105–125 (FIGVCALALSVNLDWSSMVLL), 134–154 (IVSLLSLKFLVWLLSAGWILC), 206–226 (SLVQYLGYAMYFPCLTYGPII), 243–263 (LGFVGGVLRSAIWWLVMQCAL), 293–313 (FMGQFFFLYYVVTYGLGIAFA), 372–392 (LTFAFVFVWHGCYTYVLIWSI), 429–449 (LYAMLATQLFIPAAFSNVYFI), and 461–481 (GAYLSGVGNYVALCFCSYCFF). H381 is an active-site residue.

It belongs to the membrane-bound acyltransferase family. HHAT subfamily.

It is found in the membrane. It carries out the reaction N-terminal L-cysteinyl-[protein] + hexadecanoyl-CoA = N-terminal N-hexadecanoyl-L-cysteinyl-[protein] + CoA + H(+). It catalyses the reaction N-terminal L-cysteinyl-[protein]-C-terminal glycyl cholesterol ester + hexadecanoyl-CoA = N-terminal N-hexadecanoyl-L-cysteinyl-[protein]-C-terminal glycyl cholesterol ester + CoA + H(+). Its function is as follows. Required in hedgehog (hh) expressing cells for production of appropriate signaling activity in embryos and in the imaginal precursors of adult tissues. Acts within the secretory pathway to catalyze N-terminal palmitoylation of Hh; this lipid modification is required for the embryonic and larval patterning activities of the Hh signal. Not required for Wg signaling. The protein is Protein-cysteine N-palmitoyltransferase Rasp (rasp) of Drosophila melanogaster (Fruit fly).